The primary structure comprises 173 residues: MNKNCISASWRCDERTARQVCSADDSDKMADCCKRPEDFQCPINKTAKLDFKELRYATKVPQTPVDTVFPETTANRVEIDAKTIQLLERLSLVNLDSEQALATLNSSIQFADKIAHINTENVRPLYTVLENQQLQLRNDEVKEGDCRVELLRNAKVTDEDYYVSPPGNIPLEQ.

This sequence belongs to the GatC family. As to quaternary structure, subunit of the heterotrimeric GatCAB amidotransferase (AdT) complex, composed of A, B and C subunits.

The protein resides in the mitochondrion. The enzyme catalyses L-glutamyl-tRNA(Gln) + L-glutamine + ATP + H2O = L-glutaminyl-tRNA(Gln) + L-glutamate + ADP + phosphate + H(+). In terms of biological role, allows the formation of correctly charged Gln-tRNA(Gln) through the transamidation of misacylated Glu-tRNA(Gln) in the mitochondria. The reaction takes place in the presence of glutamine and ATP through an activated gamma-phospho-Glu-tRNA(Gln). The sequence is that of Glutamyl-tRNA(Gln) amidotransferase subunit C, mitochondrial from Drosophila persimilis (Fruit fly).